We begin with the raw amino-acid sequence, 145 residues long: Acidic phospholipase A2 homolog textilotoxin C chain (145 aa).

A signal peptide spans 1 to 19 (MHPAHLLVLLGVYVSLLGA). A propeptide spanning residues 20 to 27 (ARIPPLPL) is cleaved from the precursor. Intrachain disulfides connect Cys38–Cys98, Cys54–Cys144, Cys56–Cys72, Cys71–Cys125, Cys78–Cys118, Cys87–Cys111, and Cys105–Cys116.

This sequence belongs to the phospholipase A2 family. Group I subfamily. D49 sub-subfamily. Heterohexamer. 2 forms exist: 2 A or 2 B chains, 2 C chains and 2 covalently-linked D chains, and 1 A or 1 B, 1 C, 2 covalently-linked D chains and 2 differentially glycosylated covalently-linked D chains. Textilotoxin was originally described as pentameric. In terms of tissue distribution, expressed by the venom gland.

Its subcellular location is the secreted. In terms of biological role, snake venom oligomeric phospholipase A2 that has potent presynaptic neurotoxicity. Chain C is not itself neurotoxic, but it is essential for the neurotoxicity of textilotoxin. Chain C possesses a very low phospholipase activity. The chain is Acidic phospholipase A2 homolog textilotoxin C chain from Pseudonaja textilis (Eastern brown snake).